We begin with the raw amino-acid sequence, 156 residues long: Small ribosomal subunit protein uS7 (156 aa).

It belongs to the universal ribosomal protein uS7 family. In terms of assembly, part of the 30S ribosomal subunit. Contacts proteins S9 and S11.

Its function is as follows. One of the primary rRNA binding proteins, it binds directly to 16S rRNA where it nucleates assembly of the head domain of the 30S subunit. Is located at the subunit interface close to the decoding center, probably blocks exit of the E-site tRNA. This chain is Small ribosomal subunit protein uS7, found in Ligilactobacillus salivarius (strain UCC118) (Lactobacillus salivarius).